Here is a 70-residue protein sequence, read N- to C-terminus: uncharacterized protein (70 aa).

This is an uncharacterized protein from Schizosaccharomyces pombe (strain 972 / ATCC 24843) (Fission yeast).